Consider the following 1426-residue polypeptide: Epidermal growth factor receptor (1426 aa).

Positions 1–30 (MLLRRRNGPCPFPLLLLLLAHCICIWPASA) are cleaved as a signal peptide. Residues 31–868 (ARDRYARQNN…SKITANLDVN (838 aa)) are Extracellular-facing. Residues Asn128, Asn241, Asn419, Asn443, Asn482, Asn569, Asn599, Asn617, Asn816, Asn823, and Asn828 are each glycosylated (N-linked (GlcNAc...) asparagine). Residues 869–889 (MIFIITGAVLVPTICILCVVT) traverse the membrane as a helical segment. Residues 890–1426 (YICRQKQKAK…HRNRNTETRV (537 aa)) are Cytoplasmic-facing. Phosphothreonine; by PKC is present on Thr902. Positions 938 to 1198 (LRKGGVLGMG…QLTTVFAEFA (261 aa)) constitute a Protein kinase domain. Residues 944–952 (LGMGAFGRV) and Lys971 contribute to the ATP site. Asp1063 functions as the Proton acceptor in the catalytic mechanism. The tract at residues 1232–1297 (PTTDGSEAIA…DSSAREVGVG (66 aa)) is disordered. Over residues 1257–1276 (HRTDCTDEMPKLNRYCKDPS) the composition is skewed to basic and acidic residues. A Phosphotyrosine; by autocatalysis modification is found at Tyr1310.

It belongs to the protein kinase superfamily. Tyr protein kinase family. EGF receptor subfamily. As to quaternary structure, homodimer. Binding of the ligand spitz triggers homodimerization of the receptor however, it is able to form dimers, albeit weakly, in the absence of spitz. Interacts (when phosphorylated on tyrosine residues) with Vav (via SH2 domain). Interacts (when ubiquitinated) with Graf. May interact (when phosphorylated) with EGFRAP (via SH2 domain). In terms of processing, ubiquitination by Cbl in response to high spi, promotes its interaction with Graf and thus facilitates its GPI-enriched endocytic compartment (GEEC) mediated endocytosis and its subsequent degradation. As to expression, ubiquitously expressed in embryos. In larvae, uniform expression is seen in wing disks, genital disk, anlagen of testis and ovary, and brain cortex. In eye-antenna disk, highest expression is anterior to morphogenetic furrow, levels remain high in photoreceptor precursor cells. This pattern is reversed in posterior eye disk. In adults expression is high in brain cortex and thoracic and abdominal ganglia.

The protein localises to the membrane. The enzyme catalyses L-tyrosyl-[protein] + ATP = O-phospho-L-tyrosyl-[protein] + ADP + H(+). Receptor tyrosine kinase, binding ligands of the EGF family and activating several signaling cascades to convert extracellular cues into appropriate cellular responses. Known ligands include spitz, gurken, vein and giant-lens. Transduces the signal through the ras-raf-MAPK pathway. Critical for the proliferation of imaginal tissues, and for the determination of both the antero-posterior and dorso-ventral polarities of the oocyte. In the embryo, plays a role in the establishment of ventral cell fates, maintenance of amnioserosa and ventral neuroectodermal cells, germ band retraction, cell fate specification in the central nervous system, and production and repair of the cuticle. During dorsal closure (DC) functions with the dpp- and ACK-signaling pathways to regulate expression of the myosin zip in the embryonic epidermis and amnioserosa (AS), and thus coordinate the progression of epidermal cell shape changes required for correct DC. In the embryonic epidermis, functions by negatively regulating dpp and consequently the dpp-dependent expression of the myosin zip. In the AS, negatively regulates the production/ and or secretion of a diffusible signal which, is produced by the ACK-signaling pathway, and acts in the AS and epidermal cells to promote zip expression. Also required in the AS to inhibit or delay apoptosis, and consequently slow the rate of DC. Therefore functions at multiple levels to negatively regulate morphogenesis during DC, suggesting that it acts as a general brake mechanism for adjusting the rate of dorsal closure to ensure that closure proceeds smoothly and without loss of epidermal integrity. During oogenesis, one of two tyrosine kinase chemoattractant receptors (Egfr and Pvr), that function in the border cells (BC) to detect guidance cues from the oocyte and transduce this information to the guidance pathway that regulate the collective migration of the BC cluster through the nurse cells to the oocyte. The polypeptide is Epidermal growth factor receptor (Egfr) (Drosophila melanogaster (Fruit fly)).